Consider the following 41-residue polypeptide: Large ribosomal subunit protein bL36 (41 aa).

It belongs to the bacterial ribosomal protein bL36 family.

This Granulibacter bethesdensis (strain ATCC BAA-1260 / CGDNIH1) protein is Large ribosomal subunit protein bL36.